We begin with the raw amino-acid sequence, 233 residues long: tRNA (guanine-N(1)-)-methyltransferase (233 aa).

S-adenosyl-L-methionine-binding positions include G113 and 133 to 138; that span reads VGDYVL.

It belongs to the RNA methyltransferase TrmD family. As to quaternary structure, homodimer.

It is found in the cytoplasm. It catalyses the reaction guanosine(37) in tRNA + S-adenosyl-L-methionine = N(1)-methylguanosine(37) in tRNA + S-adenosyl-L-homocysteine + H(+). Specifically methylates guanosine-37 in various tRNAs. In Rhizobium etli (strain ATCC 51251 / DSM 11541 / JCM 21823 / NBRC 15573 / CFN 42), this protein is tRNA (guanine-N(1)-)-methyltransferase.